We begin with the raw amino-acid sequence, 652 residues long: DNA ligase (652 aa).

NAD(+) contacts are provided by residues 29-33 (DSQYD), 78-79 (SL), and Glu107. The active-site N6-AMP-lysine intermediate is the Lys109. NAD(+)-binding residues include Arg130, Glu164, Lys278, and Lys302. Residues Cys395, Cys398, Cys413, and Cys418 each coordinate Zn(2+). Residues 577–652 (STDAQLSGLT…IQDEDWLLNL (76 aa)) form the BRCT domain.

The protein belongs to the NAD-dependent DNA ligase family. LigA subfamily. The cofactor is Mg(2+). It depends on Mn(2+) as a cofactor.

The catalysed reaction is NAD(+) + (deoxyribonucleotide)n-3'-hydroxyl + 5'-phospho-(deoxyribonucleotide)m = (deoxyribonucleotide)n+m + AMP + beta-nicotinamide D-nucleotide.. DNA ligase that catalyzes the formation of phosphodiester linkages between 5'-phosphoryl and 3'-hydroxyl groups in double-stranded DNA using NAD as a coenzyme and as the energy source for the reaction. It is essential for DNA replication and repair of damaged DNA. The polypeptide is DNA ligase (Streptococcus agalactiae serotype III (strain NEM316)).